We begin with the raw amino-acid sequence, 335 residues long: Acetyl-coenzyme A carboxylase carboxyl transferase subunit alpha (335 aa).

The region spanning 40-294 (QLETLAARRR…KEAIEKHLNA (255 aa)) is the CoA carboxyltransferase C-terminal domain.

It belongs to the AccA family. In terms of assembly, acetyl-CoA carboxylase is a heterohexamer composed of biotin carboxyl carrier protein (AccB), biotin carboxylase (AccC) and two subunits each of ACCase subunit alpha (AccA) and ACCase subunit beta (AccD).

Its subcellular location is the cytoplasm. The catalysed reaction is N(6)-carboxybiotinyl-L-lysyl-[protein] + acetyl-CoA = N(6)-biotinyl-L-lysyl-[protein] + malonyl-CoA. It participates in lipid metabolism; malonyl-CoA biosynthesis; malonyl-CoA from acetyl-CoA: step 1/1. Functionally, component of the acetyl coenzyme A carboxylase (ACC) complex. First, biotin carboxylase catalyzes the carboxylation of biotin on its carrier protein (BCCP) and then the CO(2) group is transferred by the carboxyltransferase to acetyl-CoA to form malonyl-CoA. This Prochlorococcus marinus (strain MIT 9301) protein is Acetyl-coenzyme A carboxylase carboxyl transferase subunit alpha.